The primary structure comprises 360 residues: Codeine O-demethylase (360 aa).

One can recognise a Fe2OG dioxygenase domain in the interval 211 to 311 (GLQTMRMNYY…RLSIATFHDS (101 aa)). Residue Y220 participates in 2-oxoglutarate binding. Residues H235, D237, and H292 each coordinate Fe cation. R302 and S304 together coordinate 2-oxoglutarate.

The protein belongs to the iron/ascorbate-dependent oxidoreductase family. L-ascorbate serves as cofactor. Fe cation is required as a cofactor. Mainly expressed in stems, capsules and leaves and, to a lower extent, in roots.

It catalyses the reaction codeine + 2-oxoglutarate + O2 = morphine + formaldehyde + succinate + CO2. It carries out the reaction thebaine + 2-oxoglutarate + O2 = oripavine + formaldehyde + succinate + CO2. The enzyme catalyses (S)-scoulerine + 2-oxoglutarate + O2 = (S)-3-O-demethylscoulerine + formaldehyde + succinate + CO2. The catalysed reaction is thebaine + 2-oxoglutarate + O2 = neopinone + formaldehyde + succinate + CO2. It catalyses the reaction (S)-reticuline + 2-oxoglutarate + O2 = (S)-6-O-demethylreticuline + formaldehyde + succinate + CO2. It carries out the reaction (S)-tetrahydropalmatine + S-adenosyl-L-methionine = (S)-cis-N-methyltetrahydropalmatine + S-adenosyl-L-homocysteine. Its pathway is alkaloid biosynthesis; morphine biosynthesis. With respect to regulation, moderate substrate inhibition. Not inhibited in vitro by acylcyclohexanediones. In terms of biological role, non-heme dioxygenase involved in biosynthesis of morphinan-type benzylisoquinoline and opiate alkaloids natural products. Mediates the conversion of codeine to morphine. Also catalyzes, with lower efficiency, the 3-O-demethylation of thebaine to oripavine and of (S)-scoulerine to 3-O-demethylscoulerine. Supports, with a lower turnover, the conversion of codeinone to morphinone, of thebaine to neopinone, and of neopine to neomorphine. Supports dealkylation reactions such as O,O-demethylenation in the metabolism of protopine, benzo[c]phenanthridine, and rhoeadine alkaloids; cleaves a methylenedioxy bridge leaving two hydroxyl groups. Catalyzes the O,O-demethylenation of methylenedioxy bridges on protopine alkaloids such as allocryptopine, cryptopine and protopine. No activity with (S)-reticuline, salutaridine, papaverine, (S)-corytuberine, oripavine, pavine or noscapine. The protein is Codeine O-demethylase of Papaver somniferum (Opium poppy).